Reading from the N-terminus, the 551-residue chain is Eukaryotic translation initiation factor 3 subunit D-2 (551 aa).

The tract at residues 105–152 (NNVRARGRTGRGSQAVGGPGGPAAGGSTANSTKYGKGRNTRNTQNVGR) is disordered. Positions 119–128 (AVGGPGGPAA) are enriched in gly residues. The tract at residues 290–304 (QFDLLTVNETSLEPP) is RNA gate.

It belongs to the eIF-3 subunit D family. As to quaternary structure, component of the eukaryotic translation initiation factor 3 (eIF-3) complex. The eIF-3 complex interacts with pix.

The protein localises to the cytoplasm. Its function is as follows. mRNA cap-binding component of the eukaryotic translation initiation factor 3 (eIF-3) complex, which is involved in protein synthesis of a specialized repertoire of mRNAs and, together with other initiation factors, stimulates binding of mRNA and methionyl-tRNAi to the 40S ribosome. The eIF-3 complex specifically targets and initiates translation of a subset of mRNAs involved in cell proliferation. In the eIF-3 complex, eif3d specifically recognizes and binds the 7-methylguanosine cap of a subset of mRNAs. This Drosophila erecta (Fruit fly) protein is Eukaryotic translation initiation factor 3 subunit D-2.